Reading from the N-terminus, the 144-residue chain is Arsenate reductase ArsI1 (144 aa).

The active-site Nucleophile; cysteine thioarsenate intermediate is cysteine 14.

This sequence belongs to the ArsC family.

It carries out the reaction [glutaredoxin]-dithiol + arsenate + glutathione + H(+) = glutathionyl-S-S-[glutaredoxin] + arsenite + H2O. Functionally, catalyzes the reduction of arsenate [As(V)] to arsenite [As(III)]. Does not constitute the major arsenate reductase in cells: essential only in the absence of ArsC (AC P74313). The polypeptide is Arsenate reductase ArsI1 (Synechocystis sp. (strain ATCC 27184 / PCC 6803 / Kazusa)).